A 166-amino-acid chain; its full sequence is Disulfide bond formation protein B (166 aa).

At 1–11 (MQSFAFSTRAL) the chain is on the cytoplasmic side. The helical transmembrane segment at 12-28 (FLGLFAVCAGLLGFGLY) threads the bilayer. At 29–46 (LQHAVGLEPCPMCIMQRY) the chain is on the periplasmic side. A disulfide bridge links Cys-38 with Cys-41. A helical membrane pass occupies residues 47 to 63 (AFVAIALTALVAGLHGP). At 64–70 (GRRGTRA) the chain is on the cytoplasmic side. The helical transmembrane segment at 71–87 (YAAVILLLALAGGGVAL) threads the bilayer. The Periplasmic segment spans residues 88–143 (RQTWMQLYPPEFAECGPDLEFMLGSFPLADALPMIFQGAGDCSKVDWAFLGLSIAN). Cys-102 and Cys-129 are disulfide-bonded. A helical membrane pass occupies residues 144 to 162 (WSLVCLTLVAVFAIMMIAR). At 163–166 (KRGG) the chain is on the cytoplasmic side.

Belongs to the DsbB family.

The protein localises to the cell inner membrane. In terms of biological role, required for disulfide bond formation in some periplasmic proteins. Acts by oxidizing the DsbA protein. The chain is Disulfide bond formation protein B from Aromatoleum aromaticum (strain DSM 19018 / LMG 30748 / EbN1) (Azoarcus sp. (strain EbN1)).